Consider the following 141-residue polypeptide: MAKKLAGTMKLQVPAGQANPSPPVGPALGQRGINIMEFCKAFNAKTQDMEPGAPCPTVITYYQDKSFTMEIKTPPAAYYLKKAAKVKSGASTPSRQTVGTVTVAQVREIAEAKMRDLNANDIEGAMKIVLGSARSMGIEVK.

This sequence belongs to the universal ribosomal protein uL11 family. As to quaternary structure, part of the ribosomal stalk of the 50S ribosomal subunit. Interacts with L10 and the large rRNA to form the base of the stalk. L10 forms an elongated spine to which L12 dimers bind in a sequential fashion forming a multimeric L10(L12)X complex. Post-translationally, one or more lysine residues are methylated.

Functionally, forms part of the ribosomal stalk which helps the ribosome interact with GTP-bound translation factors. The protein is Large ribosomal subunit protein uL11 of Dinoroseobacter shibae (strain DSM 16493 / NCIMB 14021 / DFL 12).